Reading from the N-terminus, the 263-residue chain is Pyrrolysine synthase (263 aa).

L-pyrrolysine-binding residues include L8, V57, I64, and A107. 7 residues coordinate NAD(+): K155, V156, D175, C210, P228, I230, and E249.

This sequence belongs to the PylD family.

It catalyses the reaction (3R)-3-methyl-D-ornithyl-N(6)-L-lysine + NAD(+) = L-pyrrolysine + NH4(+) + NADH + 2 H(+). The protein operates within amino-acid biosynthesis; L-pyrrolysine biosynthesis. Its function is as follows. Catalyzes the ultimate step of the pyrrolysine biosynthesis pathway by converting the isopeptide (3R)-3-methyl-D-ornithyl-N(6)-L-lysine to the 22nd proteinogenic amino acid. Is able to use surrogate substrates such as (3R)-D-ornithyl-N(6)-L-lysine in vitro. This is Pyrrolysine synthase from Methanosarcina barkeri (strain Fusaro / DSM 804).